The following is a 356-amino-acid chain: S-adenosylmethionine:tRNA ribosyltransferase-isomerase (356 aa).

The protein belongs to the QueA family. As to quaternary structure, monomer.

The protein localises to the cytoplasm. The catalysed reaction is 7-aminomethyl-7-carbaguanosine(34) in tRNA + S-adenosyl-L-methionine = epoxyqueuosine(34) in tRNA + adenine + L-methionine + 2 H(+). It functions in the pathway tRNA modification; tRNA-queuosine biosynthesis. Transfers and isomerizes the ribose moiety from AdoMet to the 7-aminomethyl group of 7-deazaguanine (preQ1-tRNA) to give epoxyqueuosine (oQ-tRNA). This chain is S-adenosylmethionine:tRNA ribosyltransferase-isomerase, found in Shigella dysenteriae serotype 1 (strain Sd197).